A 288-amino-acid chain; its full sequence is Nucleotide-binding protein PM0169 (288 aa).

8–15 serves as a coordination point for ATP; the sequence is GHSGAGKS. 56–59 contributes to the GTP binding site; that stretch reads DIRN.

This sequence belongs to the RapZ-like family.

In terms of biological role, displays ATPase and GTPase activities. This Pasteurella multocida (strain Pm70) protein is Nucleotide-binding protein PM0169.